We begin with the raw amino-acid sequence, 84 residues long: DNA-directed RNA polymerase subunit Rpo5 (84 aa).

Belongs to the archaeal Rpo5/eukaryotic RPB5 RNA polymerase subunit family. In terms of assembly, part of the RNA polymerase complex.

It is found in the cytoplasm. The catalysed reaction is RNA(n) + a ribonucleoside 5'-triphosphate = RNA(n+1) + diphosphate. Functionally, DNA-dependent RNA polymerase (RNAP) catalyzes the transcription of DNA into RNA using the four ribonucleoside triphosphates as substrates. This Sulfurisphaera tokodaii (strain DSM 16993 / JCM 10545 / NBRC 100140 / 7) (Sulfolobus tokodaii) protein is DNA-directed RNA polymerase subunit Rpo5.